A 244-amino-acid chain; its full sequence is Ribosomal RNA small subunit methyltransferase G (244 aa).

S-adenosyl-L-methionine contacts are provided by residues G79, F84, 102–104 (DST), 130–131 (AE), and R149. The interval 225-244 (DRYPRREGVPNQQPLFWSAK) is disordered. The segment covering 234 to 244 (PNQQPLFWSAK) has biased composition (polar residues).

It belongs to the methyltransferase superfamily. RNA methyltransferase RsmG family.

It localises to the cytoplasm. Specifically methylates the N7 position of a guanine in 16S rRNA. This is Ribosomal RNA small subunit methyltransferase G from Deinococcus deserti (strain DSM 17065 / CIP 109153 / LMG 22923 / VCD115).